Consider the following 565-residue polypeptide: Sulfite reductase [NADPH] hemoprotein beta-component (565 aa).

Residues cysteine 429, cysteine 435, cysteine 474, and cysteine 478 each contribute to the [4Fe-4S] cluster site. Cysteine 478 is a siroheme binding site.

Belongs to the nitrite and sulfite reductase 4Fe-4S domain family. In terms of assembly, alpha(8)-beta(8). The alpha component is a flavoprotein, the beta component is a hemoprotein. Siroheme is required as a cofactor. [4Fe-4S] cluster serves as cofactor.

It catalyses the reaction hydrogen sulfide + 3 NADP(+) + 3 H2O = sulfite + 3 NADPH + 4 H(+). It participates in sulfur metabolism; hydrogen sulfide biosynthesis; hydrogen sulfide from sulfite (NADPH route): step 1/1. Its function is as follows. Component of the sulfite reductase complex that catalyzes the 6-electron reduction of sulfite to sulfide. This is one of several activities required for the biosynthesis of L-cysteine from sulfate. This is Sulfite reductase [NADPH] hemoprotein beta-component from Shewanella sp. (strain MR-4).